Consider the following 122-residue polypeptide: MIQQETRLHVADNTGAKELLAIRVLGGSKRRYAGIGDVIVASVKDAIPGGSVKKGDVVKAVVVRTVKESRRADGSYIKFDENAAVILGSGREPKGTRIFGPVGRELREHKFMKIVSLAPEVI.

This sequence belongs to the universal ribosomal protein uL14 family. As to quaternary structure, part of the 50S ribosomal subunit. Forms a cluster with proteins L3 and L19. In the 70S ribosome, L14 and L19 interact and together make contacts with the 16S rRNA in bridges B5 and B8.

Functionally, binds to 23S rRNA. Forms part of two intersubunit bridges in the 70S ribosome. The protein is Large ribosomal subunit protein uL14 of Bifidobacterium longum (strain DJO10A).